A 72-amino-acid chain; its full sequence is ATP-dependent Clp protease ATP-binding subunit ClpA homolog (72 aa).

Belongs to the ClpA/ClpB family.

Its subcellular location is the plastid. It is found in the chloroplast. May interact with a ClpP-like protease involved in degradation of denatured proteins in the chloroplast. The protein is ATP-dependent Clp protease ATP-binding subunit ClpA homolog of Populus euphratica (Euphrates poplar).